The primary structure comprises 542 residues: uncharacterized protein (542 aa).

At 1 to 78 (MSVQKEEYDI…EEKKLVRKMD (78 aa)) the chain is on the extracellular side. The helical transmembrane segment at 79 to 99 (LKIFLWVFIMFAFLDLIRKNI) threads the bilayer. At 100–119 (ARAVSDNFIVDLKMNTNDYN) the chain is on the cytoplasmic side. The helical transmembrane segment at 120 to 140 (LGQTVYLVIFLASELPGNLLS) threads the bilayer. Residues 141–147 (KRFGPER) lie on the Extracellular side of the membrane. Residues 148–168 (VIPVQIVLWSVICITQAGLKN) form a helical membrane-spanning segment. Over 169 to 176 (RGQFIATR) the chain is Cytoplasmic. Residues 177–197 (CLLGMVQGGFIPDNILYLSYY) form a helical membrane-spanning segment. Residues 198–208 (YTGAELTFRLS) are Extracellular-facing. A helical membrane pass occupies residues 209-229 (FFWCAIPLFQILGSLLASGII). The Cytoplasmic segment spans residues 230–241 (EMRGIHNLAGWQ). Residues 242 to 262 (YLFIIEGFLSLSVGVASFYLM) form a helical membrane-spanning segment. Residues 263–326 (RRGPTQTGES…TLTEFDLWPL (64 aa)) are Extracellular-facing. Residues 327 to 347 (FIQGITAFISLQTVGSYLSLI) traverse the membrane as a helical segment. Residues 348–359 (LKSLNYSTFLSN) are Cytoplasmic-facing. A helical transmembrane segment spans residues 360–380 (ILAIPGQALLLINLPLAALLS). At 381 to 387 (RKLKEKS) the chain is on the extracellular side. The chain crosses the membrane as a helical span at residues 388 to 408 (LCVGIANVWVLPFIVSLVALP). Residues 409 to 416 (TDTNPWIK) lie on the Cytoplasmic side of the membrane. Residues 417–437 (YILLTGILGLPYTHSILAGWV) traverse the membrane as a helical segment. Residues 438–482 (SEISNSVRSRTVGTALYNMSAQVGAIIASNMYRNDDKPYYTRGNK) are Extracellular-facing. The chain crosses the membrane as a helical span at residues 483–503 (ILLGFTCFNICMAVATKFYYI). Residues 504–542 (SRNKYKDRKWNSMTKEEQINYLDTTKDKGMKRLDYRFIH) are Cytoplasmic-facing.

This sequence belongs to the major facilitator superfamily. Allantoate permease family.

The protein localises to the membrane. This is an uncharacterized protein from Saccharomyces cerevisiae (strain ATCC 204508 / S288c) (Baker's yeast).